The chain runs to 874 residues: Speckle targeted PIP5K1A-regulated poly(A) polymerase (874 aa).

Residues 16–46 form a Matrin-type zinc finger; the sequence is FRCCLCHVTTANRPSLDAHLGGRKHRHLVEL. Residues 56-128 enclose the RRM domain; that stretch reads RSVFVSGFPR…HRLRVRPREQ (73 aa). The interval 113–146 is disordered; it reads QHSLGGHRLRVRPREQKEFQSPASKSPKGAAPDS. Ser-205 is a binding site for ATP. Residues Asp-216 and Asp-218 each contribute to the Mg(2+) site. Residues Asp-216 and Asp-218 each coordinate UTP. Positions 252 to 334 are disordered; it reads QALACTPASP…ELAETPKEEK (83 aa). Residues 259-269 show a composition bias toward pro residues; it reads ASPPDSQPPAS. Residues 280–291 are compositionally biased toward polar residues; that stretch reads TPSSSLAPQTPD. Asn-392 lines the ATP pocket. Asn-392, Arg-414, Tyr-432, and His-549 together coordinate UTP. The PAP-associated domain maps to 491–549; that stretch reads LSSLLAQFFSCVSCWDLRGSLLSLREGQALPVAGGLPSNLWEGLRLGPLNLQDPFDLSH. Residues 598–874 are KA1; binds the bulging loops of U6 snRNA but is dispensable for terminal uridylyltransferase activity; the sequence is SSPSSLLSAT…FLPQAIRHLK (277 aa). Disordered stretches follow at residues 638–662 and 705–761; these read ATKR…KRLK and MQSP…ASLP. Ser-750 carries the post-translational modification Phosphoserine.

Belongs to the DNA polymerase type-B-like family. As to quaternary structure, associates with the cleavage and polyadenylation specificity factor (CPSF) complex. Interacts with CPSF1 and CPSF3; the interaction is direct. Interacts with PIP5K1A. Requires Mg(2+) as cofactor. The cofactor is Mn(2+). In terms of processing, phosphorylated by CK1 in the proline-rich (Pro-rich) region. As to expression, widely expressed.

The protein localises to the nucleus. The protein resides in the nucleolus. It localises to the nucleus speckle. It carries out the reaction RNA(n) + UTP = RNA(n)-3'-uridine ribonucleotide + diphosphate. It catalyses the reaction RNA(n) + ATP = RNA(n)-3'-adenine ribonucleotide + diphosphate. Its activity is regulated as follows. Adenylyltransferase activity is specifically phosphatidylinositol 4,5-bisphosphate (PtdIns(4,5)P2). Functionally, poly(A) polymerase that creates the 3'-poly(A) tail of specific pre-mRNAs. Localizes to nuclear speckles together with PIP5K1A and mediates polyadenylation of a select set of mRNAs, such as HMOX1. In addition to polyadenylation, it is also required for the 3'-end cleavage of pre-mRNAs: binds to the 3'UTR of targeted pre-mRNAs and promotes the recruitment and assembly of the CPSF complex on the 3'UTR of pre-mRNAs. In addition to adenylyltransferase activity, also has uridylyltransferase activity. However, the ATP ratio is higher than UTP in cells, suggesting that it functions primarily as a poly(A) polymerase. Acts as a specific terminal uridylyltransferase for U6 snRNA in vitro: responsible for a controlled elongation reaction that results in the restoration of the four 3'-terminal UMP-residues found in newly transcribed U6 snRNA. Not involved in replication-dependent histone mRNA degradation. The polypeptide is Speckle targeted PIP5K1A-regulated poly(A) polymerase (TUT1) (Homo sapiens (Human)).